A 107-amino-acid polypeptide reads, in one-letter code: Nucleoid-associated protein BAbS19_I00290 (107 aa).

The protein belongs to the YbaB/EbfC family. In terms of assembly, homodimer.

The protein resides in the cytoplasm. It localises to the nucleoid. Its function is as follows. Binds to DNA and alters its conformation. May be involved in regulation of gene expression, nucleoid organization and DNA protection. This chain is Nucleoid-associated protein BAbS19_I00290, found in Brucella abortus (strain S19).